A 141-amino-acid polypeptide reads, in one-letter code: Large ribosomal subunit protein uL11 (141 aa).

Belongs to the universal ribosomal protein uL11 family. As to quaternary structure, part of the ribosomal stalk of the 50S ribosomal subunit. Interacts with L10 and the large rRNA to form the base of the stalk. L10 forms an elongated spine to which L12 dimers bind in a sequential fashion forming a multimeric L10(L12)X complex. One or more lysine residues are methylated.

Forms part of the ribosomal stalk which helps the ribosome interact with GTP-bound translation factors. In Nitratiruptor sp. (strain SB155-2), this protein is Large ribosomal subunit protein uL11.